The chain runs to 553 residues: Capsid protein VP1 (553 aa).

It belongs to the microviridae F protein family.

Its subcellular location is the virion. The protein resides in the host cytoplasm. Assembles to form an icosahedral capsid with a T=1 symmetry. In Spiroplasma virus 4 (SpV4), this protein is Capsid protein VP1.